The chain runs to 482 residues: Chitobiosyldiphosphodolichol beta-mannosyltransferase (482 aa).

Over 1 to 2 the chain is Lumenal; that stretch reads MA. A helical transmembrane segment spans residues 3–23; sequence ASCVALLVLALLLLVLLLGLW. Residues 24-99 lie on the Cytoplasmic side of the membrane; sequence KRGRQTGRAR…DLRGLGAGPR (76 aa). An intramembrane region (helical) is located at residues 100-120; the sequence is ILQYGVKVVFQAVYLLWKMMR. Topologically, residues 121-482 are cytoplasmic; that stretch reads MDPAAYIFLQ…PCGHPSCRGF (362 aa). The residue at position 242 (Ser-242) is a Phosphoserine.

The protein belongs to the glycosyltransferase group 1 family. Glycosyltransferase 33 subfamily.

It localises to the endoplasmic reticulum membrane. It carries out the reaction an N,N'-diacetylchitobiosyl-diphospho-di-trans,poly-cis-dolichol + GDP-alpha-D-mannose = a beta-D-Man-(1-&gt;4)-beta-D-GlcNAc-(1-&gt;4)-alpha-D-GlcNAc-diphospho-di-trans,poly-cis-dolichol + GDP + H(+). It functions in the pathway protein modification; protein glycosylation. In terms of biological role, mannosyltransferase that operates in the biosynthetic pathway of dolichol-linked oligosaccharides, the glycan precursors employed in protein asparagine (N)-glycosylation. The assembly of dolichol-linked oligosaccharides begins on the cytosolic side of the endoplasmic reticulum membrane and finishes in its lumen. The sequential addition of sugars to dolichol pyrophosphate produces dolichol-linked oligosaccharides containing fourteen sugars, including two GlcNAcs, nine mannoses and three glucoses. Once assembled, the oligosaccharide is transferred from the lipid to nascent proteins by oligosaccharyltransferases. Catalyzes, on the cytoplasmic face of the endoplasmic reticulum, the addition of the first mannose residues to the dolichol-linked oligosaccharide chain, to produce Man1GlcNAc(2)-PP-dolichol core oligosaccharide. Man1GlcNAc(2)-PP-dolichol is a substrate for ALG2, the following enzyme in the biosynthetic pathway. This Mus musculus (Mouse) protein is Chitobiosyldiphosphodolichol beta-mannosyltransferase.